Consider the following 688-residue polypeptide: Complement C1s subcomponent (688 aa).

An N-terminal signal peptide occupies residues 1 to 15; that stretch reads MWCIVLFSLLAWVYA. In terms of domain architecture, CUB 1 spans 16–130; that stretch reads EPTMYGEILS…TGFAAYYVAT (115 aa). Residues E60, D68, D113, D131, I132, and E134 each coordinate Ca(2+). C65 and C83 are oxidised to a cystine. The 42-residue stretch at 131-172 folds into the EGF-like; calcium-binding domain; sequence DINECTDFVDVPCSHFCNNFIGGYFCSCPPEYFLHDDMKNCG. 3 cysteine pairs are disulfide-bonded: C135–C147, C143–C156, and C158–C171. Residues N149, F150, and G153 each contribute to the Ca(2+) site. Position 149 is a (3R)-3-hydroxyasparagine (N149). N-linked (GlcNAc...) asparagine glycosylation is present at N174. C175 and C202 are oxidised to a cystine. A CUB 2 domain is found at 175 to 290; sequence CSGDVFTALI…KGWKLRYHGD (116 aa). 5 residues coordinate Ca(2+): E226, D236, D275, G278, and Q279. Residues C234 and C251 are joined by a disulfide bond. Sushi domains lie at 292–356 and 357–423; these read MPCP…KCQP and VDCG…KCVP. 7 disulfides stabilise this stretch: C294/C341, C321/C354, C359/C403, C386/C421, C425/C549, C595/C618, and C628/C659. A glycan (N-linked (GlcNAc...) asparagine) is linked at N406. Residues 438–680 form the Peptidase S1 domain; the sequence is IIGGSDADIK…YVDWIMKTMQ (243 aa). Catalysis depends on charge relay system residues H475 and D529. Residue S632 is the Charge relay system of the active site.

Belongs to the peptidase S1 family. Core component of the complement C1 complex, a calcium-dependent complex composed of 1 molecule of the C1Q subcomplex, 2 molecules of C1R and 2 molecules of C1S. The C1Q subcomplex is composed 18 subunits: 3 chains of C1QA, C1QB, and C1QC trimerize to form 6 collagen-like triple helices connected to six globular ligand-recognition modules. Cleaved and activated by C1R to generate Complement C1s subcomponent heavy and light chains. In terms of processing, the iron and 2-oxoglutarate dependent 3-hydroxylation of aspartate and asparagine is (R) stereospecific within EGF domains.

Its subcellular location is the secreted. The protein localises to the cell surface. It carries out the reaction Cleavage of Arg-|-Ala bond in complement component C4 to form C4a and C4b, and Lys(or Arg)-|-Lys bond in complement component C2 to form C2a and C2b: the 'classical' pathway C3 convertase.. With respect to regulation, cleaved and activated by C1R. Immunoglobulin-binding promotes autoactivation of C1R, which results in the cleavage of the Arg-Ile bond in the catalytic domain. Inhibited by C1 inhibitor (SERPING1). In terms of biological role, component of the complement C1 complex, a multiprotein complex that initiates the classical pathway of the complement system, a cascade of proteins that leads to phagocytosis and breakdown of pathogens and signaling that strengthens the adaptive immune system. C1S is activated following association of the C1 complex with immunoglobulins (IgG or IgM) complexed with antigens to form antigen-antibody complexes on the surface of pathogens. C1S is cleaved and activated by C1R to generate C1s subcomponent heavy and light chains. C1s subcomponent light chain then cleaves and activates C2 and C4, the next components of the classical complement pathway. Serine protease component of the complement C1 complex, which catalyzes cleavage and activation of C2 and C4, the next components of the classical complement pathway. Also able to cleave C1 inhibitor (SERPING1) in vitro; additional evidence is however required to confirm this result in vivo. Also cleaves IGFBP5 and thereby inhibits the trophic effects of IGF1. This Homo sapiens (Human) protein is Complement C1s subcomponent.